The sequence spans 79 residues: Sec-independent protein translocase protein TatA (79 aa).

The chain crosses the membrane as a helical span at residues methionine 1–glycine 21.

This sequence belongs to the TatA/E family. As to quaternary structure, the Tat system comprises two distinct complexes: a TatABC complex, containing multiple copies of TatA, TatB and TatC subunits, and a separate TatA complex, containing only TatA subunits. Substrates initially bind to the TatABC complex, which probably triggers association of the separate TatA complex to form the active translocon.

The protein localises to the cell inner membrane. Functionally, part of the twin-arginine translocation (Tat) system that transports large folded proteins containing a characteristic twin-arginine motif in their signal peptide across membranes. TatA could form the protein-conducting channel of the Tat system. The polypeptide is Sec-independent protein translocase protein TatA (Campylobacter lari (strain RM2100 / D67 / ATCC BAA-1060)).